Reading from the N-terminus, the 556-residue chain is MKSDIEIAQSVALQPITDIVKKVGIDGDDIELYGKYKAKLSFEKMKAVEANEPGKLLLVTAINPTPAGEGKSTMSIGLADALNQMGKKTMLALREPSLGPVMGIKGGAAGGGYAQVLPMEDINLHFTGDMHAITTANNALSALIDNHLQQGNDLGIDPRRIIWKRVLDLNDRALRQVIVGLGSPVNGVPREDGFDITVASEIMAILCLATDLKDLKKRLADIVVAYTYDRKPVYVRDLKVEGALTLILKDAIKPNLVQTIYGTPALIHGGPFANIAHGCNSVLATSTALRLADYTVTEAGFGADLGAEKFLNIKVPNLPKAPDAIVIVATLRALKMHGGVAKSDLAAENCEAVRLGFANLKRHVENMRQFKVPVVVAINEFVADTEAEIATLKALCEEIKVPVELASVWANGAEGGLALAKTVVRVIDQEAADYKRLYSDEDTLEEKVINIVTQIYGGKAVQFGPKAKTQLKQFTEFGWDKLPVCMAKTQYSFSDNPSLLGAPTDFDITIREFVPKTGAGFIVGLTGDVMTMPGLPKVPAAMAMDVAENGTALGLF.

65 to 72 (TPAGEGKS) contributes to the ATP binding site.

It belongs to the formate--tetrahydrofolate ligase family.

It carries out the reaction (6S)-5,6,7,8-tetrahydrofolate + formate + ATP = (6R)-10-formyltetrahydrofolate + ADP + phosphate. The protein operates within one-carbon metabolism; tetrahydrofolate interconversion. This is Formate--tetrahydrofolate ligase 1 from Streptococcus pyogenes serotype M28 (strain MGAS6180).